The sequence spans 366 residues: Neutral protease 2 homolog BDBG_02110 (366 aa).

Residues 1–19 (MQLSSVLLTAAGLLAPVYS) form the signal peptide. Residues 23 to 184 (ISIGRRSEGL…RAKIHDHLAQ (162 aa)) constitute a propeptide that is removed on maturation. Residues Asn123 and Asn192 are each glycosylated (N-linked (GlcNAc...) asparagine). An intrachain disulfide couples Cys272 to Cys290. His314 is a binding site for Zn(2+). Residue Glu315 is part of the active site. His318 contacts Zn(2+).

Belongs to the peptidase M35 family. The cofactor is Zn(2+).

Its subcellular location is the secreted. It catalyses the reaction Preferential cleavage of bonds with hydrophobic residues in P1'. Also 3-Asn-|-Gln-4 and 8-Gly-|-Ser-9 bonds in insulin B chain.. In terms of biological role, secreted metalloproteinase that allows assimilation of proteinaceous substrates. Shows high activities on basic nuclear substrates such as histone and protamine. This is Neutral protease 2 homolog BDBG_02110 from Blastomyces gilchristii (strain SLH14081) (Blastomyces dermatitidis).